A 442-amino-acid polypeptide reads, in one-letter code: UPF0489 protein C5orf22 homolog (442 aa).

A disordered region spans residues S175–T208. The segment covering N189 to E200 has biased composition (polar residues).

The protein belongs to the UPF0489 family.

The polypeptide is UPF0489 protein C5orf22 homolog (Pongo abelii (Sumatran orangutan)).